Consider the following 119-residue polypeptide: Beta-2-microglobulin (119 aa).

An N-terminal signal peptide occupies residues methionine 1–alanine 20. Residues proline 25–lysine 114 form the Ig-like C1-type domain. A disulfide bond links cysteine 45 and cysteine 100.

The protein belongs to the beta-2-microglobulin family. In terms of assembly, heterodimer of an alpha chain and a beta chain. Beta-2-microglobulin is the beta-chain of major histocompatibility complex class I molecules.

It is found in the secreted. Component of the class I major histocompatibility complex (MHC). Involved in the presentation of peptide antigens to the immune system. This chain is Beta-2-microglobulin (B2M), found in Callithrix aurita (White-eared marmoset).